The primary structure comprises 378 residues: MNHSDTLSLSLELLQQPSVTPIDHTCQTIIAERLAKVGFHIEPMRFGDVDNLWARRGTEGPVFCFAGHTDVVPTGRLDAWNSDPFAPEIRDGKLYGRGSADMKTALAAMVVASERFIAKHPNHKGSIAFLITSDEEGPAVNGTVKVIETLEKRNEKITWCLVGEPSSTHKLGDIVKNGRRGSLNAVLKVQGKQGHVAYPHLARNPIHEASPALAELCQTVWDNGNEYFPATSFQISNIHAGTGATNVIPGALEVTFNFRYSTEVTAEQLKQRVHEILDKHGLQYEIVWNLSGLPFLTPVGELVNAAQTAILNVTGTETELSTSGGTSDGRFIAPTGAQVLELGVLNATIHQINEHVDVHDLDPLTDIYEQILENLLAQ.

Histidine 68 contributes to the Zn(2+) binding site. Residue aspartate 70 is part of the active site. Residue aspartate 101 participates in Zn(2+) binding. Glutamate 135 functions as the Proton acceptor in the catalytic mechanism. Zn(2+) contacts are provided by glutamate 136, glutamate 164, and histidine 350.

Belongs to the peptidase M20A family. DapE subfamily. In terms of assembly, homodimer. It depends on Zn(2+) as a cofactor. Co(2+) serves as cofactor.

The catalysed reaction is N-succinyl-(2S,6S)-2,6-diaminopimelate + H2O = (2S,6S)-2,6-diaminopimelate + succinate. Its pathway is amino-acid biosynthesis; L-lysine biosynthesis via DAP pathway; LL-2,6-diaminopimelate from (S)-tetrahydrodipicolinate (succinylase route): step 3/3. Its function is as follows. Catalyzes the hydrolysis of N-succinyl-L,L-diaminopimelic acid (SDAP), forming succinate and LL-2,6-diaminopimelate (DAP), an intermediate involved in the bacterial biosynthesis of lysine and meso-diaminopimelic acid, an essential component of bacterial cell walls. In Acinetobacter baumannii (strain ACICU), this protein is Succinyl-diaminopimelate desuccinylase.